A 168-amino-acid polypeptide reads, in one-letter code: Putative adenylate kinase (168 aa).

ATP-binding residues include glycine 10, glycine 12, lysine 13, threonine 14, and threonine 15. The segment at 28–51 (HLNERIREEGLDAGRDEERDSLVA) is NMP. The segment at 97–107 (DRGEPAAKAAE) is LID. Arginine 98 provides a ligand contact to ATP.

This sequence belongs to the adenylate kinase family. AK6 subfamily. Interacts with uS11. Not a structural component of 40S pre-ribosomes, but transiently interacts with them by binding to uS11.

It carries out the reaction AMP + ATP = 2 ADP. The enzyme catalyses ATP + H2O = ADP + phosphate + H(+). Its function is as follows. Broad-specificity nucleoside monophosphate (NMP) kinase that catalyzes the reversible transfer of the terminal phosphate group between nucleoside triphosphates and monophosphates. Also has ATPase activity. Involved in the late maturation steps of the 30S ribosomal particles, specifically 16S rRNA maturation. While NMP activity is not required for ribosome maturation, ATPase activity is. Associates transiently with small ribosomal subunit protein uS11. ATP hydrolysis breaks the interaction with uS11. May temporarily remove uS11 from the ribosome to enable a conformational change of the ribosomal RNA that is needed for the final maturation step of the small ribosomal subunit. This is Putative adenylate kinase from Natronomonas pharaonis (strain ATCC 35678 / DSM 2160 / CIP 103997 / JCM 8858 / NBRC 14720 / NCIMB 2260 / Gabara) (Halobacterium pharaonis).